The following is a 776-amino-acid chain: Venom dipeptidyl peptidase 4 (776 aa).

Residues 1–25 (MVPLRSFVLLNSLFLVLLAARTVVT) form the signal peptide. N-linked (GlcNAc...) asparagine glycans are attached at residues N44, N66, and N329. 2 disulfide bridges follow: C449/C452 and C462/C480. N-linked (GlcNAc...) asparagine glycans are attached at residues N504 and N577. S638 (charge relay system) is an active-site residue. The cysteines at positions 658 and 769 are disulfide-linked. N-linked (GlcNAc...) asparagine glycans are attached at residues N688 and N693. Catalysis depends on charge relay system residues D717 and H749.

The protein belongs to the peptidase S9B family. DPPIV subfamily. As to expression, expressed by the venom gland.

Its subcellular location is the secreted. It carries out the reaction Release of an N-terminal dipeptide, Xaa-Yaa-|-Zaa-, from a polypeptide, preferentially when Yaa is Pro, provided Zaa is neither Pro nor hydroxyproline.. Inhibited by diprotin A. In terms of biological role, venom dipeptidyl-peptidase which removes N-terminal dipeptides sequentially from polypeptides having unsubstituted N-termini provided that the penultimate residue is proline. May process venom proteins into their active forms and/or modulate the chemotactic activity of immune cells after the insect sting. In Vespula vulgaris (Yellow jacket), this protein is Venom dipeptidyl peptidase 4.